The following is an 85-amino-acid chain: Large ribosomal subunit protein bL27 (85 aa).

Residues Met1–Arg20 are disordered.

This sequence belongs to the bacterial ribosomal protein bL27 family.

The chain is Large ribosomal subunit protein bL27 from Haemophilus influenzae (strain ATCC 51907 / DSM 11121 / KW20 / Rd).